The following is a 205-amino-acid chain: uncharacterized protein (205 aa).

A signal peptide spans 1–18; sequence MKASLALLSLLTAFTSHS.

This is an uncharacterized protein from Escherichia coli (strain K12).